The following is a 215-amino-acid chain: MGTHMYSEQGINNTINISTTSLTNATQLTVIGNNNSVYIGNNCKIVSSNIRLKGNNITLFIADDVENMGLVCSLHSDCSLQIQAKTTMGNGEITIAEKGKISIGKDCMLAHGYEIRNTDMHPIYSLENGERINHGKDVIIGNHVWLGRNVTILKGVCIPNNVVVGSHTVLYKSFKEPNCVIAGSPAKIVKENIVWGRKMYHSTMYDDPTLNEFYK.

Residues 119–121 (DMH), R148, K154, S166, 171–172 (YK), and K190 each bind acetyl-CoA.

Belongs to the transferase hexapeptide repeat family. Homotrimer.

The enzyme catalyses [(2-&gt;6)-alpha-D-glucosyl-(1-&gt;4)-N-acetyl-alpha-D-neuraminosyl](n) + n acetyl-CoA = [(2-&gt;6)-alpha-D-glucosyl-(1-&gt;4)-N,7-O-diacetyl-alpha-D-neuraminosyl](n) + n CoA. The catalysed reaction is [(2-&gt;6)-alpha-D-glucosyl-(1-&gt;4)-N-acetyl-alpha-D-neuraminosyl](n) + n acetyl-CoA = [(2-&gt;6)-alpha-D-glucosyl-(1-&gt;4)-N,O(9)-diacetyl-alpha-D-neuraminosyl](n) + n CoA. Its function is as follows. Catalyzes the O-acetylation of capsular polymeric sialic acid consisting of polymers of (2-&gt;6)-alpha-D-glucosyl-(1-&gt;4)-N-acetyl-alpha-D-neuraminosyl residues. Shows high substrate specificity toward polymers of sialic acid that contains a large number of residues. The sequence is that of Polysialic acid O-acetyltransferase from Neisseria meningitidis.